Consider the following 269-residue polypeptide: Hydroxyethylthiazole kinase (269 aa).

Residue Met-45 coordinates substrate. Residues Arg-121 and Thr-167 each contribute to the ATP site. Gly-194 is a substrate binding site.

The protein belongs to the Thz kinase family. Requires Mg(2+) as cofactor.

The enzyme catalyses 5-(2-hydroxyethyl)-4-methylthiazole + ATP = 4-methyl-5-(2-phosphooxyethyl)-thiazole + ADP + H(+). The protein operates within cofactor biosynthesis; thiamine diphosphate biosynthesis; 4-methyl-5-(2-phosphoethyl)-thiazole from 5-(2-hydroxyethyl)-4-methylthiazole: step 1/1. Functionally, catalyzes the phosphorylation of the hydroxyl group of 4-methyl-5-beta-hydroxyethylthiazole (THZ). The polypeptide is Hydroxyethylthiazole kinase (Geobacillus sp. (strain WCH70)).